Here is a 746-residue protein sequence, read N- to C-terminus: MQAKKRYFILLSAGSCLALLFYFGGVQFRASRSHSRREEHSGRNGLHQPSPDHFWPRFADALHPFFPWDQLENEDSGVHVSPRQKRDANSSVYKGKKCRMESCFDFALCKKNGFKVYVYPQQKGEKIAESYQNILAAIEGSRFYTSDPSQACLFVLSLDTLDRDQLSPQYVHNLRSKVQSLHLWNNGRNHLIFNLYSGTWPDYTEDVGFDIGQAMLAKASISTENFRPNFDVSIPLFSKDHPRTGGERGFLKFNTIPPLRKYMLVFKGKRYLTGIGSDTRNALYHVHNGEDVLLLTTCKHGKDWQKHKDSRCDRDNTEYEKYDYREMLHNATFCLVPRGRRLGSFRFLEALQAACVPVMLSNGWELPFSEVINWNQAAVIGDERLLLQIPSTIRSIHQDKILALRQQTQFLWEAYFSSVEKIVLTTLEIIQDRIFKHISRNSLIWNKHPGGLFVLPQYSSYLGDFPYYYANLGLKPPSKFTAVIHAVTPLVSQSQPVLKLLVAAAKSQYCAQIIVLWNCDKPLPAKHRWPATAVPVIVIEGESKVMSSRFLPYDNIITDAVLSLDEDTVLSTTEVDFAFTVWQSFPERIVGYPARSHFWDNSKERWGYTSKWTNDYSMVLTGAAIYHKYYHYLYTHYLPASLKNMVDQLANCEDILMNFLVSAVTKLPPIKVTQKKQYKETMMGQTSRASRWADPDHFAQRQSCMNTFASWFGYMPLIHSQMRLDPVLFKDQVSILRKKYRDIERL.

Topologically, residues 1 to 5 (MQAKK) are cytoplasmic. A helical; Signal-anchor for type II membrane protein transmembrane segment spans residues 6 to 26 (RYFILLSAGSCLALLFYFGGV). Over 27–746 (QFRASRSHSR…RKKYRDIERL (720 aa)) the chain is Lumenal. Asn89 carries an N-linked (GlcNAc...) asparagine glycan. 2 disulfides stabilise this stretch: Cys98–Cys103 and Cys109–Cys152. Leu166 and Tyr203 together coordinate a protein. Lys267, Lys269, Tyr271, and Arg280 together coordinate UDP. Cys298 and Cys312 are joined by a disulfide. His300 is a binding site for a protein. UDP-binding residues include Tyr319 and Tyr324. An N-linked (GlcNAc...) asparagine glycan is attached at Asn330. Cystine bridges form between Cys334–Cys355 and Cys652–Cys704. UDP-binding residues include Arg346 and Glu349.

This sequence belongs to the glycosyltransferase 47 family. In terms of assembly, part of the heparan sulfate polymerase, a dimeric complex composed of EXT1 and EXT2. Could also form homooligomeric complexes. Interacts with NDST1. N-glycosylated.

The protein localises to the golgi apparatus membrane. The protein resides in the golgi apparatus. It localises to the cis-Golgi network membrane. Its subcellular location is the endoplasmic reticulum membrane. The enzyme catalyses 3-O-{alpha-D-GlcNAc-[(1-&gt;4)-beta-D-GlcA-(1-&gt;4)-alpha-D-GlcNAc](n)-(1-&gt;4)-beta-D-GlcA-(1-&gt;3)-beta-D-Gal-(1-&gt;3)-beta-D-Gal-(1-&gt;4)-beta-D-Xyl}-L-seryl-[protein] + UDP-alpha-D-glucuronate = 3-O-{[(1-&gt;4)-beta-D-GlcA-(1-&gt;4)-alpha-D-GlcNAc](n+1)-(1-&gt;4)-beta-D-GlcA-(1-&gt;3)-beta-D-Gal-(1-&gt;3)-beta-D-Gal-(1-&gt;4)-beta-D-Xyl}-L-seryl-[protein] + UDP + H(+). It functions in the pathway protein modification; protein glycosylation. Its function is as follows. Glycosyltransferase forming with EXT2 the heterodimeric heparan sulfate polymerase which catalyzes the elongation of the heparan sulfate glycan backbone. Glycan backbone extension consists in the alternating transfer of (1-&gt;4)-beta-D-GlcA and (1-&gt;4)-alpha-D-GlcNAc residues from their respective UDP-sugar donors. Both EXT1 and EXT2 are required for the full activity of the polymerase since EXT1 bears the N-acetylglucosaminyl-proteoglycan 4-beta-glucuronosyltransferase activity within the complex while EXT2 carries the glucuronosyl-N-acetylglucosaminyl-proteoglycan 4-alpha-N-acetylglucosaminyltransferase activity. Heparan sulfate proteoglycans are ubiquitous components of the extracellular matrix and play an important role in tissue homeostasis and signaling. The protein is Exostosin-1 of Cricetulus griseus (Chinese hamster).